The chain runs to 426 residues: Stationary phase-inducible protein CsiE (426 aa).

PRD domains lie at 120 to 225 and 229 to 336; these read ARNF…DPLR and QRDR…ENDL.

This is Stationary phase-inducible protein CsiE (csiE) from Escherichia coli (strain K12).